The chain runs to 118 residues: Small ribosomal subunit protein uS13 (118 aa).

The tract at residues 93-118 (KKLPVRGQRTKTNARTRKGPRKLMKK) is disordered.

This sequence belongs to the universal ribosomal protein uS13 family. In terms of assembly, part of the 30S ribosomal subunit. Forms a loose heterodimer with protein S19. Forms two bridges to the 50S subunit in the 70S ribosome.

Its function is as follows. Located at the top of the head of the 30S subunit, it contacts several helices of the 16S rRNA. In the 70S ribosome it contacts the 23S rRNA (bridge B1a) and protein L5 of the 50S subunit (bridge B1b), connecting the 2 subunits; these bridges are implicated in subunit movement. Contacts the tRNAs in the A and P-sites. The sequence is that of Small ribosomal subunit protein uS13 from Buchnera aphidicola subsp. Baizongia pistaciae (strain Bp).